A 262-amino-acid chain; its full sequence is Acyl-[acyl-carrier-protein]--UDP-N-acetylglucosamine O-acyltransferase (262 aa).

This sequence belongs to the transferase hexapeptide repeat family. LpxA subfamily. Homotrimer.

The protein resides in the cytoplasm. It carries out the reaction a (3R)-hydroxyacyl-[ACP] + UDP-N-acetyl-alpha-D-glucosamine = a UDP-3-O-[(3R)-3-hydroxyacyl]-N-acetyl-alpha-D-glucosamine + holo-[ACP]. It participates in glycolipid biosynthesis; lipid IV(A) biosynthesis; lipid IV(A) from (3R)-3-hydroxytetradecanoyl-[acyl-carrier-protein] and UDP-N-acetyl-alpha-D-glucosamine: step 1/6. Functionally, involved in the biosynthesis of lipid A, a phosphorylated glycolipid that anchors the lipopolysaccharide to the outer membrane of the cell. This Blochmanniella floridana protein is Acyl-[acyl-carrier-protein]--UDP-N-acetylglucosamine O-acyltransferase.